Consider the following 89-residue polypeptide: Putative RING finger protein 121R (89 aa).

An RING-type zinc finger spans residues 45–78; that stretch reads CPICLIAKVNTVLECTHVLCSNCVKKINVCPICR.

In Invertebrate iridescent virus 6 (IIV-6), this protein is Putative RING finger protein 121R.